We begin with the raw amino-acid sequence, 391 residues long: Mannose-6-phosphate isomerase (391 aa).

Positions 97, 99, 134, and 255 each coordinate Zn(2+). R274 is an active-site residue. K280 is modified (N6-acetyllysine).

This sequence belongs to the mannose-6-phosphate isomerase type 1 family. The cofactor is Zn(2+).

It is found in the cytoplasm. The catalysed reaction is D-mannose 6-phosphate = D-fructose 6-phosphate. Functionally, involved in the conversion of glucose to GDP-L-fucose, which can be converted to L-fucose, a capsular polysaccharide. In Shigella flexneri, this protein is Mannose-6-phosphate isomerase (manA).